A 1059-amino-acid chain; its full sequence is Probable sucrose-phosphate synthase (1059 aa).

Disordered stretches follow at residues 95–145 (AVQR…VKSR), 671–695 (RHPQWQRSEDGGESSESEESPGDSL), 710–731 (DGERSGDSGNDNSLDPDGNATD), and 748–769 (SKDTRRGGATEKSGQNSNASKF). The span at 102–114 (RRLERERGRREAT) shows a compositional bias: basic and acidic residues. Positions 681–691 (GGESSESEESP) are enriched in acidic residues.

This sequence belongs to the glycosyltransferase 1 family. As to quaternary structure, homodimer or homotetramer.

The enzyme catalyses beta-D-fructose 6-phosphate + UDP-alpha-D-glucose = sucrose 6(F)-phosphate + UDP + H(+). It participates in glycan biosynthesis; sucrose biosynthesis; sucrose from D-fructose 6-phosphate and UDP-alpha-D-glucose: step 1/2. Its activity is regulated as follows. Activity is regulated by phosphorylation and moderated by concentration of metabolites and light. Functionally, plays a role in photosynthetic sucrose synthesis by catalyzing the rate-limiting step of sucrose biosynthesis from UDP-glucose and fructose- 6-phosphate. Involved in the regulation of carbon partitioning in the leaves of plants. May regulate the synthesis of sucrose and therefore play a major role as a limiting factor in the export of photoassimilates out of the leaf. Plays a role for sucrose availability that is essential for plant growth and fiber elongation. This chain is Probable sucrose-phosphate synthase (SPS), found in Vicia faba (Broad bean).